The chain runs to 1415 residues: DNA-directed RNA polymerase subunit beta' (1415 aa).

Cys72, Cys74, Cys87, and Cys90 together coordinate Zn(2+). 3 residues coordinate Mg(2+): Asp463, Asp465, and Asp467. 4 residues coordinate Zn(2+): Cys811, Cys885, Cys892, and Cys895.

It belongs to the RNA polymerase beta' chain family. In terms of assembly, the RNAP catalytic core consists of 2 alpha, 1 beta, 1 beta' and 1 omega subunit. When a sigma factor is associated with the core the holoenzyme is formed, which can initiate transcription. It depends on Mg(2+) as a cofactor. Zn(2+) serves as cofactor.

The enzyme catalyses RNA(n) + a ribonucleoside 5'-triphosphate = RNA(n+1) + diphosphate. Its function is as follows. DNA-dependent RNA polymerase catalyzes the transcription of DNA into RNA using the four ribonucleoside triphosphates as substrates. This chain is DNA-directed RNA polymerase subunit beta', found in Cereibacter sphaeroides (strain ATCC 17029 / ATH 2.4.9) (Rhodobacter sphaeroides).